A 166-amino-acid chain; its full sequence is Large ribosomal subunit protein uL11 (166 aa).

R67 carries the post-translational modification N5-methylarginine.

Belongs to the universal ribosomal protein uL11 family.

This is Large ribosomal subunit protein uL11 (RPL12) from Encephalitozoon cuniculi (strain GB-M1) (Microsporidian parasite).